We begin with the raw amino-acid sequence, 185 residues long: Ribosome-recycling factor (185 aa).

This sequence belongs to the RRF family.

Its subcellular location is the cytoplasm. Its function is as follows. Responsible for the release of ribosomes from messenger RNA at the termination of protein biosynthesis. May increase the efficiency of translation by recycling ribosomes from one round of translation to another. The polypeptide is Ribosome-recycling factor (Alcanivorax borkumensis (strain ATCC 700651 / DSM 11573 / NCIMB 13689 / SK2)).